The following is a 303-amino-acid chain: Major fimbrium anchoring subunit FimB (303 aa).

A signal peptide spans 1 to 22 (MNDAKKYIVSVLILLVAGMFGG). Cysteine 23 is lipidated: N-palmitoyl cysteine. Cysteine 23 carries the S-diacylglycerol cysteine lipid modification.

It belongs to the bacteroidetes fimbrillin superfamily. FimB/Mfa2 family. FimB is not part of the fimbrium itself, but anchors the fimbrium in the outer membrane. Linear, head-to-tail oligomerization of fimbrial subunits mediates assembly of the fimbrium stalk, while the minor components FimC, FimD and FimE probably form the fimbrium tip. The anchoring subunit FimB limits fimbrium length and is important for solid fimbrium attachment to the outer membrane. In its absence, the major fimbriae become very long and are easily detached from the membrane.

It localises to the cell outer membrane. Anchoring subunit of the major fimbriae. Regulates fimbrial length. These filamentous pili are attached to the cell surface; they mediate biofilm formation, adhesion onto host cells and onto other bacteria that are part of the oral microbiome. Fimbriae of P.gingivalis are major virulence factors. The chain is Major fimbrium anchoring subunit FimB from Porphyromonas gingivalis (strain ATCC BAA-308 / W83).